Consider the following 229-residue polypeptide: Heptaprenylglyceryl phosphate synthase (229 aa).

Residue Lys-12 coordinates sn-glycerol 1-phosphate. 2 residues coordinate Mg(2+): Asp-14 and Ser-40. Residues 159-164 (YLEYSG), Gly-189, and 209-210 (GN) each bind sn-glycerol 1-phosphate.

The protein belongs to the GGGP/HepGP synthase family. Group I subfamily. In terms of assembly, homodimer. The cofactor is Mg(2+).

The catalysed reaction is sn-glycerol 1-phosphate + all-trans-heptaprenyl diphosphate = 3-heptaprenyl-sn-glycero-1-phosphate + diphosphate. Its pathway is membrane lipid metabolism; glycerophospholipid metabolism. Prenyltransferase that catalyzes in vivo the transfer of the heptaprenyl moiety of heptaprenyl pyrophosphate (HepPP; 35 carbon atoms) to the C3 hydroxyl of sn-glycerol-1-phosphate (G1P), producing heptaprenylglyceryl phosphate (HepGP). This reaction is an ether-bond-formation step in the biosynthesis of archaea-type G1P-based membrane lipids found in Bacillales. The sequence is that of Heptaprenylglyceryl phosphate synthase from Bacillus cereus (strain ZK / E33L).